Consider the following 358-residue polypeptide: Peptide chain release factor 1 (358 aa).

An N5-methylglutamine modification is found at Gln233.

Belongs to the prokaryotic/mitochondrial release factor family. Methylated by PrmC. Methylation increases the termination efficiency of RF1.

Its subcellular location is the cytoplasm. Peptide chain release factor 1 directs the termination of translation in response to the peptide chain termination codons UAG and UAA. This is Peptide chain release factor 1 from Listeria monocytogenes serovar 1/2a (strain ATCC BAA-679 / EGD-e).